Here is a 47-residue protein sequence, read N- to C-terminus: Delta-actitoxin-Axm1d (47 aa).

3 disulfide bridges follow: cysteine 4/cysteine 44, cysteine 6/cysteine 34, and cysteine 27/cysteine 45.

Belongs to the sea anemone sodium channel inhibitory toxin family. Type I subfamily.

The protein resides in the secreted. The protein localises to the nematocyst. Binds specifically to voltage-gated sodium channels (Nav), thereby delaying their inactivation during signal transduction. Thus it strongly stimulates mammalian cardiac muscle contraction. This Anthopleura xanthogrammica (Giant green sea anemone) protein is Delta-actitoxin-Axm1d.